Reading from the N-terminus, the 702-residue chain is Arginine decarboxylase 1 (702 aa).

K151 is subject to N6-(pyridoxal phosphate)lysine. 336–346 (IDVGGGLGIDY) contributes to the substrate binding site. Residues 668-686 (ASGESSGMSSDSEGSAAGA) are compositionally biased toward low complexity. The segment at 668–702 (ASGESSGMSSDSEGSAAGAAEEDDDEWEFMRGLTV) is disordered.

The protein belongs to the Orn/Lys/Arg decarboxylase class-II family. SpeA subfamily. Requires pyridoxal 5'-phosphate as cofactor. Mg(2+) serves as cofactor. Expressed in roots, leaves and stems (at protein level).

The enzyme catalyses L-arginine + H(+) = agmatine + CO2. The protein operates within amine and polyamine biosynthesis; agmatine biosynthesis; agmatine from L-arginine: step 1/1. This chain is Arginine decarboxylase 1 (ADC1), found in Oryza sativa subsp. japonica (Rice).